We begin with the raw amino-acid sequence, 422 residues long: 4-hydroxy-3-methylbut-2-en-1-yl diphosphate synthase (flavodoxin) (422 aa).

Positions 316, 319, 362, and 369 each coordinate [4Fe-4S] cluster.

Belongs to the IspG family. Requires [4Fe-4S] cluster as cofactor.

The enzyme catalyses (2E)-4-hydroxy-3-methylbut-2-enyl diphosphate + oxidized [flavodoxin] + H2O + 2 H(+) = 2-C-methyl-D-erythritol 2,4-cyclic diphosphate + reduced [flavodoxin]. It participates in isoprenoid biosynthesis; isopentenyl diphosphate biosynthesis via DXP pathway; isopentenyl diphosphate from 1-deoxy-D-xylulose 5-phosphate: step 5/6. In terms of biological role, converts 2C-methyl-D-erythritol 2,4-cyclodiphosphate (ME-2,4cPP) into 1-hydroxy-2-methyl-2-(E)-butenyl 4-diphosphate. This is 4-hydroxy-3-methylbut-2-en-1-yl diphosphate synthase (flavodoxin) from Anaplasma marginale (strain St. Maries).